Consider the following 284-residue polypeptide: Pantothenate synthetase (284 aa).

30 to 37 (MGNLHDGH) lines the ATP pocket. H37 (proton donor) is an active-site residue. Residue Q61 coordinates (R)-pantoate. Q61 contributes to the beta-alanine binding site. 149-152 (GEKD) provides a ligand contact to ATP. Q155 is a binding site for (R)-pantoate. ATP contacts are provided by residues V178 and 186-189 (LSSR).

It belongs to the pantothenate synthetase family. As to quaternary structure, homodimer.

The protein localises to the cytoplasm. The enzyme catalyses (R)-pantoate + beta-alanine + ATP = (R)-pantothenate + AMP + diphosphate + H(+). It participates in cofactor biosynthesis; (R)-pantothenate biosynthesis; (R)-pantothenate from (R)-pantoate and beta-alanine: step 1/1. In terms of biological role, catalyzes the condensation of pantoate with beta-alanine in an ATP-dependent reaction via a pantoyl-adenylate intermediate. The polypeptide is Pantothenate synthetase (Cronobacter sakazakii (strain ATCC BAA-894) (Enterobacter sakazakii)).